Here is a 261-residue protein sequence, read N- to C-terminus: Taurine import ATP-binding protein TauB (261 aa).

The 230-residue stretch at 4–233 (LQLEGIGAHY…RYSAGESARA (230 aa)) folds into the ABC transporter domain. Position 38–45 (38–45 (GPSGSGKT)) interacts with ATP.

Belongs to the ABC transporter superfamily. Taurine importer (TC 3.A.1.17.1) family. The complex is composed of two ATP-binding proteins (TauB), two transmembrane proteins (TauC) and a solute-binding protein (TauA).

The protein resides in the cell inner membrane. The catalysed reaction is taurine(out) + ATP + H2O = taurine(in) + ADP + phosphate + H(+). In terms of biological role, part of the ABC transporter complex TauABC involved in taurine import. Responsible for energy coupling to the transport system. In Pseudomonas syringae pv. tomato (strain ATCC BAA-871 / DC3000), this protein is Taurine import ATP-binding protein TauB.